The primary structure comprises 310 residues: Delta(1)-pyrroline-2-carboxylate reductase 1 (310 aa).

Belongs to the ornithine cyclodeaminase/mu-crystallin family.

The catalysed reaction is L-proline + NAD(+) = 1-pyrroline-2-carboxylate + NADH + H(+). The enzyme catalyses L-proline + NADP(+) = 1-pyrroline-2-carboxylate + NADPH + H(+). Functionally, catalyzes the reduction of Delta(1)-pyrroline-2-carboxylate (Pyr2C) to L-proline, using NADPH as the electron donor. May be involved in a degradation pathway that converts trans-3-hydroxy-L-proline (t3LHyp) to L-proline. The protein is Delta(1)-pyrroline-2-carboxylate reductase 1 of Burkholderia multivorans (strain ATCC 17616 / 249).